The following is a 607-amino-acid chain: Autophagy-related protein 22-2 (607 aa).

Residues 9-31 (FQSPSPDEGVQQRPPRYVGEDTT) are disordered. The chain crosses the membrane as a helical span at residues 44–64 (YGIAAEVFAVCGVGSFLPLTL). Residues N88 and N91 are each glycosylated (N-linked (GlcNAc...) asparagine). 3 consecutive transmembrane segments (helical) span residues 111–131 (SFAMYTFSLAVLIQALTLISF), 143–160 (TLLMVFGFAGALASMLFV), and 161–178 (FIAPPLFVIGSILVVVGV). The interval 203-263 (QEGKADDGTE…GMGTKAPLSS (61 aa)) is disordered. N-linked (GlcNAc...) asparagine glycosylation is present at N235. 8 helical membrane-spanning segments follow: residues 277–297 (GIGLGYCAAVFVQIISIIMLL), 310–330 (TLPMRFVLLLVGIWWGAFTLV), 381–401 (VLIFLVAWFLLSDAMATVSGT), 415–435 (PLIGLLSITATLSGMTGAFLW), 450–470 (IILCIALFEMIPLYGLLAYIP), 484–504 (WEIFPLAIVHGVVSGGLASYC), 521–543 (YALYAATDKGSSFIGPAIVGGIV), and 552–572 (GFFFMAILIVLPIPLVWMVNA). Residues 585 to 607 (TLGKSHGGPAEDAQEAEGLLARE) form a disordered region.

It belongs to the ATG22 family.

The protein localises to the vacuole membrane. Functionally, vacuolar effluxer which mediate the efflux of amino acids resulting from autophagic degradation. The release of autophagic amino acids allows the maintenance of protein synthesis and viability during nitrogen starvation. The polypeptide is Autophagy-related protein 22-2 (atg22-2) (Penicillium rubens (strain ATCC 28089 / DSM 1075 / NRRL 1951 / Wisconsin 54-1255) (Penicillium chrysogenum)).